The sequence spans 301 residues: Acetylglutamate kinase (301 aa).

Substrate contacts are provided by residues 68–69 (GG), arginine 90, and asparagine 195.

Belongs to the acetylglutamate kinase family. ArgB subfamily.

It is found in the cytoplasm. The catalysed reaction is N-acetyl-L-glutamate + ATP = N-acetyl-L-glutamyl 5-phosphate + ADP. The protein operates within amino-acid biosynthesis; L-arginine biosynthesis; N(2)-acetyl-L-ornithine from L-glutamate: step 2/4. Catalyzes the ATP-dependent phosphorylation of N-acetyl-L-glutamate. The chain is Acetylglutamate kinase from Pseudomonas putida (strain ATCC 700007 / DSM 6899 / JCM 31910 / BCRC 17059 / LMG 24140 / F1).